Consider the following 430-residue polypeptide: MDIFKNRNFVRLFFAALASQMGTTVGNMAFAFFLLDRFSSQPSYTTLAELMYSLPTIFVFLIVGVVADRFDRKKVAENCDWIRAGLTVVLFFTLFTGNIPLVFCILFIRSAVTKFFFPAENSLVQAILPKEHYAKAAGLNQMLFSIFMVFGVGIGAFMYNTIGIEGAIILDFVSFIISGLLIRSCRIPKEARQPNGAFSWRKTSVKDSINDFREGILYILKNKLLASLIFGFFIFGFVNGGFAVLPMFTMKYGLAPDRYEWHTSVFTIALGFGLLAGSVIGTLISKKVKPHFLMSIPIFIAGLLIFVLGYTNILWVYYAAAFALGMCIGPINIAIGGWMPKIVHPKLMGRVSGMQDPFMMFAQSLTLGLVALLFPKFVSNIDYLYYGMGVIILLVFIFYFIALPKYSAQAVEVNVQEAFQEQPKKKARSV.

The next 10 membrane-spanning stretches (helical) occupy residues 13–33 (FFAALASQMGTTVGNMAFAFF), 47–67 (LAELMYSLPTIFVFLIVGVVA), 88–108 (VVLFFTLFTGNIPLVFCILFI), 138–158 (GLNQMLFSIFMVFGVGIGAFM), 228–248 (LIFGFFIFGFVNGGFAVLPMF), 264–284 (SVFTIALGFGLLAGSVIGTLI), 296–316 (IPIFIAGLLIFVLGYTNILWV), 319–339 (AAAFALGMCIGPINIAIGGWM), 358–378 (FMMFAQSLTLGLVALLFPKFV), and 383–403 (YLYYGMGVIILLVFIFYFIAL).

The protein belongs to the major facilitator superfamily.

It localises to the cell membrane. This is an uncharacterized protein from Bacillus subtilis (strain 168).